We begin with the raw amino-acid sequence, 231 residues long: ADP-ribosylation factor-like protein 6-interacting protein 4 (231 aa).

The segment covering 1 to 19 has biased composition (basic residues); it reads MAHVSSRKRSRSRSRSRGR. The segment at 1-154 is disordered; it reads MAHVSSRKRS…EDNDGPVLTD (154 aa). Residues 20–34 show a composition bias toward basic and acidic residues; sequence RGSEKRSKRSSKDSS. Positions 64-89 are enriched in low complexity; that stretch reads TSRSSSSSSSSSSSSSSSSTSSSSSS. Basic residues predominate over residues 92–119; sequence RKKRGKHKDKKKRKKKKKRKKKMKRKGK. Ser-142 and Ser-176 each carry phosphoserine. Lys-193 participates in a covalent cross-link: Glycyl lysine isopeptide (Lys-Gly) (interchain with G-Cter in SUMO2).

This sequence belongs to the ARL6IP4 family. In terms of assembly, interacts with ARL6. Interacts with ZCCHC17. Interacts with SRSF2.

The protein localises to the nucleus. The protein resides in the nucleolus. Its subcellular location is the nucleus speckle. Its function is as follows. Involved in modulating alternative pre-mRNA splicing with either 5' distal site activation or preferential use of 3' proximal site. The protein is ADP-ribosylation factor-like protein 6-interacting protein 4 (Arl6ip4) of Rattus norvegicus (Rat).